The sequence spans 726 residues: Probable cadmium-transporting ATPase (726 aa).

One can recognise an HMA domain in the interval 11-74 (DKQVYRVEGF…AGAFENLKVF (64 aa)). Residues Cys22 and Cys25 each coordinate Cd(2+). Helical transmembrane passes span 105–125 (STLL…FVNG), 129–149 (LVTS…LFKV), 163–179 (TLMT…GEWA), 335–355 (IIMV…GGSW), and 363–383 (LAVL…ISIV). Asp414 (4-aspartylphosphate intermediate) is an active-site residue. 2 helical membrane passes run 671–693 (LNII…LLVI) and 698–720 (TLWI…SLRL).

The protein belongs to the cation transport ATPase (P-type) (TC 3.A.3) family. Type IB subfamily.

It localises to the cell membrane. It catalyses the reaction Cd(2+)(in) + ATP + H2O = Cd(2+)(out) + ADP + phosphate + H(+). In terms of biological role, couples the hydrolysis of ATP with the export of cadmium. This is Probable cadmium-transporting ATPase (cadA) from Staphylococcus aureus (strain MRSA252).